We begin with the raw amino-acid sequence, 833 residues long: DNA ligase (833 aa).

Residues 35–39, 84–85, and Glu115 each bind NAD(+); these read DADYD and SL. Residue Lys117 is the N6-AMP-lysine intermediate of the active site. NAD(+) is bound by residues Arg138, Glu175, Lys292, and Lys316. 4 residues coordinate Zn(2+): Cys410, Cys413, Cys428, and Cys434. In terms of domain architecture, BRCT spans 750 to 833; the sequence is EKTGPLDGQT…AFLGDHGQQP (84 aa).

This sequence belongs to the NAD-dependent DNA ligase family. LigA subfamily. Mg(2+) is required as a cofactor. Requires Mn(2+) as cofactor.

It catalyses the reaction NAD(+) + (deoxyribonucleotide)n-3'-hydroxyl + 5'-phospho-(deoxyribonucleotide)m = (deoxyribonucleotide)n+m + AMP + beta-nicotinamide D-nucleotide.. DNA ligase that catalyzes the formation of phosphodiester linkages between 5'-phosphoryl and 3'-hydroxyl groups in double-stranded DNA using NAD as a coenzyme and as the energy source for the reaction. It is essential for DNA replication and repair of damaged DNA. The protein is DNA ligase of Xanthomonas axonopodis pv. citri (strain 306).